The chain runs to 343 residues: Uroporphyrinogen decarboxylase (343 aa).

Residues 23–27 (RQAGR), Asp73, Tyr151, Ser206, and His319 each bind substrate.

The protein belongs to the uroporphyrinogen decarboxylase family. As to quaternary structure, homodimer.

It is found in the cytoplasm. It carries out the reaction uroporphyrinogen III + 4 H(+) = coproporphyrinogen III + 4 CO2. It functions in the pathway porphyrin-containing compound metabolism; protoporphyrin-IX biosynthesis; coproporphyrinogen-III from 5-aminolevulinate: step 4/4. Its function is as follows. Catalyzes the decarboxylation of four acetate groups of uroporphyrinogen-III to yield coproporphyrinogen-III. The polypeptide is Uroporphyrinogen decarboxylase (Sulfurimonas denitrificans (strain ATCC 33889 / DSM 1251) (Thiomicrospira denitrificans (strain ATCC 33889 / DSM 1251))).